A 330-amino-acid chain; its full sequence is Molybdate/tungstate import ATP-binding protein WtpC (330 aa).

In terms of domain architecture, ABC transporter spans 3–232 (LMVEGISKDY…PASEEVAKFL (230 aa)). 34–41 (GPSGAGKT) lines the ATP pocket.

Belongs to the ABC transporter superfamily. Sulfate/tungstate importer (TC 3.A.1.6) family. In terms of assembly, the complex is composed of two ATP-binding proteins (WtpC), two transmembrane proteins (WtpB) and a solute-binding protein (WtpA).

It localises to the cell membrane. It carries out the reaction tungstate(in) + ATP + H2O = tungstate(out) + ADP + phosphate + H(+). Its function is as follows. Part of the ABC transporter complex WtpABC involved in molybdate/tungstate import. Responsible for energy coupling to the transport system. The chain is Molybdate/tungstate import ATP-binding protein WtpC (wtpC) from Thermococcus kodakarensis (strain ATCC BAA-918 / JCM 12380 / KOD1) (Pyrococcus kodakaraensis (strain KOD1)).